A 317-amino-acid chain; its full sequence is Melanocyte-stimulating hormone receptor (317 aa).

Residues 1 to 37 (MSVQGPQRRLLGSVNSTSPAAPRLGLAANQTGPRCLE) are Extracellular-facing. N-linked (GlcNAc...) asparagine glycosylation is found at N15 and N29. A helical membrane pass occupies residues 38 to 63 (VSVPDGLFLSLGLVSVVENVLVVAAI). Residues 64-72 (AKNRNLHSP) are Cytoplasmic-facing. Residues 73–93 (MYYFICCLAVSDLLVSVSSVL) form a helical membrane-spanning segment. Topologically, residues 94-118 (ETAVMLLLEAGTLAGRAAVVQQLDD) are extracellular. A helical membrane pass occupies residues 119 to 140 (IIDVLVCGAMVSSLCFLGAIAV). Over 141–163 (DRYISIFYALRYHSIVTLPRAWR) the chain is Cytoplasmic. Residues 164–183 (AISAIWVASVLSSTLFIAYY) form a helical membrane-spanning segment. The Extracellular portion of the chain corresponds to 184–191 (DHTAVLLC). A helical transmembrane segment spans residues 192–211 (LVSFFVAMLVLMAVLYVHML). Residues 212-240 (ARACQHARGIARLHKRQRPVHQGLGLKGA) lie on the Cytoplasmic side of the membrane. The chain crosses the membrane as a helical span at residues 241–266 (ATLTILLGIFFLCWGPFFLHLSLMVL). At 267 to 279 (CPRHPICGCVFKN) the chain is on the extracellular side. The helical transmembrane segment at 280 to 300 (FNLFLTLIICNSIVDPLIYAF) threads the bilayer. Over 301–317 (RSQELRKTLREVLLCSW) the chain is Cytoplasmic. C315 carries the S-palmitoyl cysteine lipid modification.

This sequence belongs to the G-protein coupled receptor 1 family. As to quaternary structure, interacts with MGRN1, but does not undergo MGRN1-mediated ubiquitination; this interaction competes with GNAS-binding and thus inhibits agonist-induced cAMP production. Interacts with OPN3; the interaction results in a decrease in MC1R-mediated cAMP signaling and ultimately a decrease in melanin production in melanocytes.

Its subcellular location is the cell membrane. Its function is as follows. Receptor for MSH (alpha, beta and gamma) and ACTH. The activity of this receptor is mediated by G proteins which activate adenylate cyclase. Mediates melanogenesis, the production of eumelanin (black/brown) and phaeomelanin (red/yellow), via regulation of cAMP signaling in melanocytes. The sequence is that of Melanocyte-stimulating hormone receptor (MC1R) from Puma yagouaroundi (Jaguarundi).